Here is a 157-residue protein sequence, read N- to C-terminus: 6,7-dimethyl-8-ribityllumazine synthase 1 (157 aa).

5-amino-6-(D-ribitylamino)uracil-binding positions include phenylalanine 22, 53-55, and 82-84; these read ALE and TVI. 87-88 contributes to the (2S)-2-hydroxy-3-oxobutyl phosphate binding site; it reads ET. The active-site Proton donor is the histidine 90. Asparagine 115 provides a ligand contact to 5-amino-6-(D-ribitylamino)uracil. Arginine 129 provides a ligand contact to (2S)-2-hydroxy-3-oxobutyl phosphate.

Belongs to the DMRL synthase family.

It carries out the reaction (2S)-2-hydroxy-3-oxobutyl phosphate + 5-amino-6-(D-ribitylamino)uracil = 6,7-dimethyl-8-(1-D-ribityl)lumazine + phosphate + 2 H2O + H(+). It functions in the pathway cofactor biosynthesis; riboflavin biosynthesis; riboflavin from 2-hydroxy-3-oxobutyl phosphate and 5-amino-6-(D-ribitylamino)uracil: step 1/2. Functionally, catalyzes the formation of 6,7-dimethyl-8-ribityllumazine by condensation of 5-amino-6-(D-ribitylamino)uracil with 3,4-dihydroxy-2-butanone 4-phosphate. This is the penultimate step in the biosynthesis of riboflavin. This Brucella suis biovar 1 (strain 1330) protein is 6,7-dimethyl-8-ribityllumazine synthase 1.